The primary structure comprises 185 residues: ATP synthase subunit delta (185 aa).

The protein belongs to the ATPase delta chain family. As to quaternary structure, F-type ATPases have 2 components, F(1) - the catalytic core - and F(0) - the membrane proton channel. F(1) has five subunits: alpha(3), beta(3), gamma(1), delta(1), epsilon(1). CF(0) has four main subunits: a(1), b(2) and c(10-14). The alpha and beta chains form an alternating ring which encloses part of the gamma chain. F(1) is attached to F(0) by a central stalk formed by the gamma and epsilon chains, while a peripheral stalk is formed by the delta and b chains.

The protein localises to the cell membrane. F(1)F(0) ATP synthase produces ATP from ADP in the presence of a proton or sodium gradient. F-type ATPases consist of two structural domains, F(1) containing the extramembraneous catalytic core and F(0) containing the membrane proton channel, linked together by a central stalk and a peripheral stalk. During catalysis, ATP synthesis in the catalytic domain of F(1) is coupled via a rotary mechanism of the central stalk subunits to proton translocation. In terms of biological role, this protein is part of the stalk that links CF(0) to CF(1). It either transmits conformational changes from CF(0) to CF(1) or is implicated in proton conduction. This is ATP synthase subunit delta from Heliobacterium modesticaldum (strain ATCC 51547 / Ice1).